The primary structure comprises 199 residues: Small ribosomal subunit protein uS4B (199 aa).

Residues 88 to 151 form the S4 RNA-binding domain; it reads CRLDNLVYRT…RKNKIFIDNF (64 aa).

Belongs to the universal ribosomal protein uS4 family. Part of the 30S ribosomal subunit. Contacts protein S5. The interaction surface between S4 and S5 is involved in control of translational fidelity.

One of the primary rRNA binding proteins, it binds directly to 16S rRNA where it nucleates assembly of the body of the 30S subunit. Functionally, with S5 and S12 plays an important role in translational accuracy. The polypeptide is Small ribosomal subunit protein uS4B (Alkaliphilus metalliredigens (strain QYMF)).